Consider the following 626-residue polypeptide: Phosphomethylpyrimidine synthase (626 aa).

Substrate is bound by residues Asn237, Met266, Tyr295, His331, 351–353 (SRG), 392–395 (DGLR), and Glu431. His435 serves as a coordination point for Zn(2+). Tyr458 lines the substrate pocket. His499 contacts Zn(2+). Residues Cys579, Cys582, and Cys587 each coordinate [4Fe-4S] cluster.

The protein belongs to the ThiC family. Homodimer. It depends on [4Fe-4S] cluster as a cofactor.

It catalyses the reaction 5-amino-1-(5-phospho-beta-D-ribosyl)imidazole + S-adenosyl-L-methionine = 4-amino-2-methyl-5-(phosphooxymethyl)pyrimidine + CO + 5'-deoxyadenosine + formate + L-methionine + 3 H(+). The protein operates within cofactor biosynthesis; thiamine diphosphate biosynthesis. In terms of biological role, catalyzes the synthesis of the hydroxymethylpyrimidine phosphate (HMP-P) moiety of thiamine from aminoimidazole ribotide (AIR) in a radical S-adenosyl-L-methionine (SAM)-dependent reaction. The sequence is that of Phosphomethylpyrimidine synthase from Cupriavidus pinatubonensis (strain JMP 134 / LMG 1197) (Cupriavidus necator (strain JMP 134)).